The sequence spans 372 residues: tRNA-specific 2-thiouridylase MnmA (372 aa).

ATP contacts are provided by residues 16 to 23 (GMSGGVDS) and M42. An interaction with target base in tRNA region spans residues 102-104 (NPD). C107 (nucleophile) is an active-site residue. A disulfide bridge connects residues C107 and C205. G132 provides a ligand contact to ATP. The segment at 155 to 157 (KDQ) is interaction with tRNA. C205 acts as the Cysteine persulfide intermediate in catalysis. The interval 317-318 (RY) is interaction with tRNA.

Belongs to the MnmA/TRMU family.

It is found in the cytoplasm. The enzyme catalyses S-sulfanyl-L-cysteinyl-[protein] + uridine(34) in tRNA + AH2 + ATP = 2-thiouridine(34) in tRNA + L-cysteinyl-[protein] + A + AMP + diphosphate + H(+). Catalyzes the 2-thiolation of uridine at the wobble position (U34) of tRNA, leading to the formation of s(2)U34. The sequence is that of tRNA-specific 2-thiouridylase MnmA from Shewanella oneidensis (strain ATCC 700550 / JCM 31522 / CIP 106686 / LMG 19005 / NCIMB 14063 / MR-1).